The following is a 420-amino-acid chain: Tryptophan synthase beta chain (420 aa).

At lysine 112 the chain carries N6-(pyridoxal phosphate)lysine.

It belongs to the TrpB family. In terms of assembly, tetramer of two alpha and two beta chains. Requires pyridoxal 5'-phosphate as cofactor.

It carries out the reaction (1S,2R)-1-C-(indol-3-yl)glycerol 3-phosphate + L-serine = D-glyceraldehyde 3-phosphate + L-tryptophan + H2O. It functions in the pathway amino-acid biosynthesis; L-tryptophan biosynthesis; L-tryptophan from chorismate: step 5/5. In terms of biological role, the beta subunit is responsible for the synthesis of L-tryptophan from indole and L-serine. The chain is Tryptophan synthase beta chain from Thermosipho africanus (strain TCF52B).